A 282-amino-acid chain; its full sequence is MIPWNAYVRLLRLNKPIGILLLWYPTAWALWMANQGFPSIDLLMIFLLGTVFMRSAGCVINDIADRHIDRHVARTQFRPLTSGEVSLSEAFILLFILLCASLFLLLKLPINCFYFAVISVLITFLYPFCKRFFNAPQLVLGLAFSMGIPMAFIASGKNLNSDFIVLFLINFSWIIAYDTMYAMTDKADDLKIGVKSTAIYFASYDRLIIALLLIFLHSLWLVWAINKNVECFFYLLWCTAAGILTYQLKLIYARIPKNCFKAFLVSGYYGLVMWFAVGLALI.

A run of 9 helical transmembrane segments spans residues 17–37, 40–60, 90–110, 113–133, 135–155, 163–183, 207–227, 231–251, and 262–282; these read IGIL…NQGF, IDLL…GCVI, AFIL…KLPI, FYFA…KRFF, APQL…FIAS, FIVL…MYAM, LIIA…AINK, CFFY…LKLI, and AFLV…LALI.

Belongs to the UbiA prenyltransferase family. The cofactor is Mg(2+).

Its subcellular location is the cell inner membrane. The enzyme catalyses all-trans-octaprenyl diphosphate + 4-hydroxybenzoate = 4-hydroxy-3-(all-trans-octaprenyl)benzoate + diphosphate. Its pathway is cofactor biosynthesis; ubiquinone biosynthesis. Its function is as follows. Catalyzes the prenylation of para-hydroxybenzoate (PHB) with an all-trans polyprenyl group. Mediates the second step in the final reaction sequence of ubiquinone-8 (UQ-8) biosynthesis, which is the condensation of the polyisoprenoid side chain with PHB, generating the first membrane-bound Q intermediate 3-octaprenyl-4-hydroxybenzoate. The sequence is that of 4-hydroxybenzoate octaprenyltransferase from Legionella pneumophila (strain Lens).